The following is a 583-amino-acid chain: Probable GTP diphosphokinase CRSH, chloroplastic (583 aa).

The transit peptide at 1 to 58 directs the protein to the chloroplast; the sequence is MSVIRPSPIPIPRCRSQVLHRRLYSIQLIQRRRRRWNPRSEVEDTAIESTARSPEAAG. One can recognise an HD domain in the interval 112–212; the sequence is PLSKALSLSI…MDLVSKLDEM (101 aa). EF-hand domains are found at residues 470–505 and 507–539; these read TTTN…LGAP and EDAE…VEFM. Ca(2+) contacts are provided by D483, N485, D487, M489, E494, D517, N519, D521, S523, and E528.

The protein belongs to the RelA/SpoT family. In terms of tissue distribution, expressed in shoots, cotyledons, rosette and cauline leaves, stems, sepals, pistils and siliques.

Its subcellular location is the plastid. The protein resides in the chloroplast. The catalysed reaction is GTP + ATP = guanosine 3'-diphosphate 5'-triphosphate + AMP. Its activity is regulated as follows. Activated by calcium. Functionally, possesses calcium-dependent ppGpp (guanosine 3'-diphosphate 5'-diphosphate) synthetase activity in vitro and is able to functionally complement E.coli relA mutants. Plays an important role in the timing adjustment of pistil and pollen maturation required for successful pollination. May be involved in a rapid plant ppGpp-mediated response to pathogens and other stresses. The polypeptide is Probable GTP diphosphokinase CRSH, chloroplastic (CRSH) (Arabidopsis thaliana (Mouse-ear cress)).